Reading from the N-terminus, the 122-residue chain is Large ribosomal subunit protein uL14 (122 aa).

It belongs to the universal ribosomal protein uL14 family. As to quaternary structure, part of the 50S ribosomal subunit. Forms a cluster with proteins L3 and L19. In the 70S ribosome, L14 and L19 interact and together make contacts with the 16S rRNA in bridges B5 and B8.

Binds to 23S rRNA. Forms part of two intersubunit bridges in the 70S ribosome. This is Large ribosomal subunit protein uL14 from Desulfosudis oleivorans (strain DSM 6200 / JCM 39069 / Hxd3) (Desulfococcus oleovorans).